Here is a 410-residue protein sequence, read N- to C-terminus: Exopolygalacturonase (410 aa).

The signal sequence occupies residues 1–22 (MACIDNAMRALFLLALFCVVHG). Residues asparagine 89 and asparagine 201 are each glycosylated (N-linked (GlcNAc...) asparagine). PbH1 repeat units lie at residues 192 to 218 (CKDM…HMGD), 219 to 240 (SSGV…SIGP), 242 to 262 (TSKV…SIGS), 272 to 293 (VTDI…RIKA), and 337 to 377 (ASKV…TMDD). The Proton donor role is filled by aspartate 233. Cysteine 235 and cysteine 252 form a disulfide bridge. A glycan (N-linked (GlcNAc...) asparagine) is linked at asparagine 246. Histidine 256 is a catalytic residue. Asparagine 349 carries an N-linked (GlcNAc...) asparagine glycan. Cysteine 364 and cysteine 370 are oxidised to a cystine. Asparagine 387 is a glycosylation site (N-linked (GlcNAc...) asparagine). A disulfide bridge connects residues cysteine 393 and cysteine 409.

The protein belongs to the glycosyl hydrolase 28 family. Pollen.

The protein localises to the secreted. Its subcellular location is the cell wall. The enzyme catalyses [(1-&gt;4)-alpha-D-galacturonosyl](n) + H2O = alpha-D-galacturonate + [(1-&gt;4)-alpha-D-galacturonosyl](n-1). Its function is as follows. May function in depolymerizing pectin during pollen development, germination, and tube growth. Acts as an exo-polygalacturonase. This Zea mays (Maize) protein is Exopolygalacturonase (PG2C).